We begin with the raw amino-acid sequence, 215 residues long: Pyrrolidone-carboxylate peptidase (215 aa).

Residues E81, C144, and H168 contribute to the active site.

Belongs to the peptidase C15 family. In terms of assembly, homotetramer.

It localises to the cytoplasm. The enzyme catalyses Release of an N-terminal pyroglutamyl group from a polypeptide, the second amino acid generally not being Pro.. Functionally, removes 5-oxoproline from various penultimate amino acid residues except L-proline. The chain is Pyrrolidone-carboxylate peptidase (pcp) from Bacillus subtilis (strain 168).